Reading from the N-terminus, the 327-residue chain is Phenylalanine--tRNA ligase alpha subunit (327 aa).

E252 is a Mg(2+) binding site.

This sequence belongs to the class-II aminoacyl-tRNA synthetase family. Phe-tRNA synthetase alpha subunit type 1 subfamily. Tetramer of two alpha and two beta subunits. Mg(2+) serves as cofactor.

The protein localises to the cytoplasm. The catalysed reaction is tRNA(Phe) + L-phenylalanine + ATP = L-phenylalanyl-tRNA(Phe) + AMP + diphosphate + H(+). The polypeptide is Phenylalanine--tRNA ligase alpha subunit (Shewanella baltica (strain OS223)).